Consider the following 319-residue polypeptide: tRNA-cytidine(32) 2-sulfurtransferase (319 aa).

Residues 43–48 (SGGKDS) carry the PP-loop motif motif. [4Fe-4S] cluster contacts are provided by Cys-118, Cys-121, and Cys-209. A disordered region spans residues 272–297 (DLAFDSEKMPERFSDGSEEDESEIKI). Positions 276–286 (DSEKMPERFSD) are enriched in basic and acidic residues.

It belongs to the TtcA family. In terms of assembly, homodimer. The cofactor is Mg(2+). It depends on [4Fe-4S] cluster as a cofactor.

It is found in the cytoplasm. It carries out the reaction cytidine(32) in tRNA + S-sulfanyl-L-cysteinyl-[cysteine desulfurase] + AH2 + ATP = 2-thiocytidine(32) in tRNA + L-cysteinyl-[cysteine desulfurase] + A + AMP + diphosphate + H(+). It participates in tRNA modification. In terms of biological role, catalyzes the ATP-dependent 2-thiolation of cytidine in position 32 of tRNA, to form 2-thiocytidine (s(2)C32). The sulfur atoms are provided by the cysteine/cysteine desulfurase (IscS) system. In Neisseria gonorrhoeae (strain ATCC 700825 / FA 1090), this protein is tRNA-cytidine(32) 2-sulfurtransferase.